The chain runs to 237 residues: Ditrans,polycis-undecaprenyl-diphosphate synthase ((2E,6E)-farnesyl-diphosphate specific) (237 aa).

Residue aspartate 11 is part of the active site. Mg(2+) is bound at residue aspartate 11. Substrate contacts are provided by residues 12–15 (GNGR), tryptophan 16, arginine 24, histidine 28, and 56–58 (SIE). The active-site Proton acceptor is the asparagine 59. Substrate is bound by residues arginine 62, arginine 179, and 185-187 (RLS). Mg(2+) is bound at residue glutamate 198.

The protein belongs to the UPP synthase family. As to quaternary structure, homodimer. The cofactor is Mg(2+).

The catalysed reaction is 8 isopentenyl diphosphate + (2E,6E)-farnesyl diphosphate = di-trans,octa-cis-undecaprenyl diphosphate + 8 diphosphate. Catalyzes the sequential condensation of isopentenyl diphosphate (IPP) with (2E,6E)-farnesyl diphosphate (E,E-FPP) to yield (2Z,6Z,10Z,14Z,18Z,22Z,26Z,30Z,34E,38E)-undecaprenyl diphosphate (di-trans,octa-cis-UPP). UPP is the precursor of glycosyl carrier lipid in the biosynthesis of bacterial cell wall polysaccharide components such as peptidoglycan and lipopolysaccharide. The chain is Ditrans,polycis-undecaprenyl-diphosphate synthase ((2E,6E)-farnesyl-diphosphate specific) from Coxiella burnetii (strain RSA 493 / Nine Mile phase I).